A 95-amino-acid polypeptide reads, in one-letter code: Membrane protein insertion and folding monitor (95 aa).

A helical transmembrane segment spans residues 12-32 (LFLVDFFTIILPALTAIGIAF). Residues 86 to 89 (DEED) form a crucial for elongation arrest region.

It is found in the cell membrane. Sensor protein that up-regulates translation of the secondary membrane protein insertase (MisCB/YqjG) when activity of the primary membrane protein insertase (MisCA/SpoIIIJ) is limited. Acts as a ribosome-nascent chain complex. When the primary membrane protein insertase activity or level is reduced, the membrane insertion of MifM is impaired, which induces arrest of MifM translation and unfolding of the mRNA hairpin. Unfolding leads to translation of the downstream gene, which encodes the secondary membrane protein insertase MisCB/YqjG. Translation arrest of MifM is mediated by interaction of its C-terminal domain with the ribosomal polypeptide exit tunnel. Undergoes multisite stalling, which may allow a sufficient duration of ribosomal stalling and consequently sufficient levels of MisCB/YqjG. The polypeptide is Membrane protein insertion and folding monitor (mifM) (Bacillus subtilis (strain 168)).